The chain runs to 208 residues: MGQKVHPTGFRLGILKSWDSRWFATKDYAKLVHEDRKIRDYIKARLYHAGIAKVEIERAANKVKIRIFTARPGIVIGKKGAEIETLRRDLERKFKREILIDIQEVRRPELDATLVGENISLQLVRRVAFRRAMKRAVSAALKFGAKGVRVASAGRLGGAEMARREWYREGRVPLHTLRADIDYGTAIARTTYGAIGVKVWIFKGEVLP.

A KH type-2 domain is found at 38–106 (IRDYIKARLY…EILIDIQEVR (69 aa)).

This sequence belongs to the universal ribosomal protein uS3 family. In terms of assembly, part of the 30S ribosomal subunit. Forms a tight complex with proteins S10 and S14.

In terms of biological role, binds the lower part of the 30S subunit head. Binds mRNA in the 70S ribosome, positioning it for translation. The polypeptide is Small ribosomal subunit protein uS3 (Syntrophobacter fumaroxidans (strain DSM 10017 / MPOB)).